The chain runs to 350 residues: Inhibitor of nuclear factor kappa-B kinase-interacting protein (350 aa).

Residues 1-11 (MSEVKSRKKSG) are compositionally biased toward basic residues. The segment at 1 to 39 (MSEVKSRKKSGPKGAPAAEPGKRSEGGKTPVARSSGGGG) is disordered. Residues 46–62 (CLSLLSLGTCLGLAWFV) form a helical membrane-spanning segment. A glycan (N-linked (GlcNAc...) asparagine) is linked at Asn144. The stretch at 184–217 (GLVTDVISLTDSVQELENKIEKVEKNTVKNIGDL) forms a coiled coil. Residue Asn328 is glycosylated (N-linked (GlcNAc...) asparagine).

Post-translationally, N-glycosylated. Isoform 4 is glycosylated at Asn-154. Expressed in vein endothelial cells. Isoform 4 is expressed in lung, kidney, spleen, thymus and skeletal muscle.

It localises to the endoplasmic reticulum membrane. Its function is as follows. Target of p53/TP53 with pro-apoptotic function. The sequence is that of Inhibitor of nuclear factor kappa-B kinase-interacting protein (IKBIP) from Homo sapiens (Human).